The chain runs to 145 residues: Probable low molecular weight protein-tyrosine-phosphatase EpsP (145 aa).

C9 acts as the Nucleophile in catalysis. The active site involves R15. D114 acts as the Proton donor in catalysis.

This sequence belongs to the low molecular weight phosphotyrosine protein phosphatase family.

It catalyses the reaction O-phospho-L-tyrosyl-[protein] + H2O = L-tyrosyl-[protein] + phosphate. It functions in the pathway glycan metabolism; exopolysaccharide biosynthesis. Functionally, may be involved in assembly or function of the EPS I polymerization/export complex and/or the EpsB ATPase. Alternatively it may function in the removal of the terminal phosphate from C55-isoprenyl pyrophosphate in order to recycle the C55-isoprenyl phosphate lipid carrier used in the synthesis of polysaccharide repeat units. The protein is Probable low molecular weight protein-tyrosine-phosphatase EpsP (epsP) of Ralstonia nicotianae (strain ATCC BAA-1114 / GMI1000) (Ralstonia solanacearum).